The following is a 93-amino-acid chain: Pyrimidine/purine nucleoside phosphorylase (93 aa).

The protein belongs to the nucleoside phosphorylase PpnP family.

The enzyme catalyses a purine D-ribonucleoside + phosphate = a purine nucleobase + alpha-D-ribose 1-phosphate. It catalyses the reaction adenosine + phosphate = alpha-D-ribose 1-phosphate + adenine. It carries out the reaction cytidine + phosphate = cytosine + alpha-D-ribose 1-phosphate. The catalysed reaction is guanosine + phosphate = alpha-D-ribose 1-phosphate + guanine. The enzyme catalyses inosine + phosphate = alpha-D-ribose 1-phosphate + hypoxanthine. It catalyses the reaction thymidine + phosphate = 2-deoxy-alpha-D-ribose 1-phosphate + thymine. It carries out the reaction uridine + phosphate = alpha-D-ribose 1-phosphate + uracil. The catalysed reaction is xanthosine + phosphate = alpha-D-ribose 1-phosphate + xanthine. In terms of biological role, catalyzes the phosphorolysis of diverse nucleosides, yielding D-ribose 1-phosphate and the respective free bases. Can use uridine, adenosine, guanosine, cytidine, thymidine, inosine and xanthosine as substrates. Also catalyzes the reverse reactions. The sequence is that of Pyrimidine/purine nucleoside phosphorylase from Tolumonas auensis (strain DSM 9187 / NBRC 110442 / TA 4).